We begin with the raw amino-acid sequence, 225 residues long: Membrane protein (225 aa).

Over 1–20 (MDNTTNCTLGTEQAVQLFKE) the chain is Virion surface. The chain crosses the membrane as a helical span at residues 21–41 (YNLFVTAFLLFLTILLQYGYA). The Intravirion portion of the chain corresponds to 42–51 (TRNKVIYILK). A helical membrane pass occupies residues 52-72 (MIVLWCFWPLNIAVGAISCIY). Residues 73-77 (PPNTG) lie on the Virion surface side of the membrane. A helical transmembrane segment spans residues 78 to 98 (GLVAAIILTVFACLSFIGYWI). Topologically, residues 99 to 225 (QSFRLFKRCR…VATGGSSLYT (127 aa)) are intravirion.

This sequence belongs to the gammacoronaviruses M protein family. In terms of assembly, homomultimer. Interacts with envelope E protein in the budding compartment of the host cell, which is located between endoplasmic reticulum and the Golgi complex. Forms a complex with HE and S proteins. Interacts with nucleocapsid N protein. This interaction probably participates in RNA packaging into the virus.

It localises to the virion membrane. The protein localises to the host Golgi apparatus membrane. Functionally, component of the viral envelope that plays a central role in virus morphogenesis and assembly via its interactions with other viral proteins. This is Membrane protein from Avian infectious bronchitis virus (strain 6/82) (IBV).